An 880-amino-acid chain; its full sequence is Alanine--tRNA ligase (880 aa).

Zn(2+) contacts are provided by H566, H570, C668, and H672.

It belongs to the class-II aminoacyl-tRNA synthetase family. The cofactor is Zn(2+).

The protein resides in the cytoplasm. The enzyme catalyses tRNA(Ala) + L-alanine + ATP = L-alanyl-tRNA(Ala) + AMP + diphosphate. Catalyzes the attachment of alanine to tRNA(Ala) in a two-step reaction: alanine is first activated by ATP to form Ala-AMP and then transferred to the acceptor end of tRNA(Ala). Also edits incorrectly charged Ser-tRNA(Ala) and Gly-tRNA(Ala) via its editing domain. This is Alanine--tRNA ligase from Acetivibrio thermocellus (strain ATCC 27405 / DSM 1237 / JCM 9322 / NBRC 103400 / NCIMB 10682 / NRRL B-4536 / VPI 7372) (Clostridium thermocellum).